The chain runs to 410 residues: 2-oxoglutarate-dependent dioxygenase AOP3 (410 aa).

Positions 258-355 (GNASVGAKEA…RYAAALFSNP (98 aa)) constitute a Fe2OG dioxygenase domain. Fe cation is bound by residues His-278, Asp-280, and His-335. Arg-346 is a binding site for 2-oxoglutarate.

Belongs to the iron/ascorbate-dependent oxidoreductase family. The cofactor is Fe(2+).

In terms of biological role, 2-oxoglutarate-dependent dioxygenase involved in glucosinolates biosynthesis. Catalyzes the conversion of methylsulfinylalkyl glucosinolates to hydroxyalkyl glucosinolates. The sequence is that of 2-oxoglutarate-dependent dioxygenase AOP3 (AOP3) from Arabidopsis thaliana (Mouse-ear cress).